The primary structure comprises 558 residues: Cyclomaltodextrinase (558 aa).

Asn143, Gly168, and Asp170 together coordinate Ca(2+). His243 and Arg323 together coordinate substrate. The Nucleophile role is filled by Asp325. Glu354 (proton donor) is an active-site residue. Residues 420–421 (HD), Asp465, and Arg469 contribute to the substrate site.

Belongs to the glycosyl hydrolase 13 family. Monomer. Depending on the pH of the solution, exists as a monomer, a homodimer or as an assembly of six homodimers forming a dodecamer, which is catalytically the most efficient form of the enzyme. It depends on Ca(2+) as a cofactor.

It catalyses the reaction cyclomaltodextrin + H2O = linear maltodextrin. It carries out the reaction Hydrolysis of pullulan to panose (6-alpha-D-glucosylmaltose).. Hydrolysis of beta-cyclodextrin is inhibited by Cu(2+), Zn(2+) and Ag(+), and activated by Ca(2+), EGTA and EDTA. Activity is increased over twofold in the presence of 5 mM EDTA. Competitively inhibited by acarbose and methyl 6-amino-6-deoxy-alpha-D-glucopyranoside by reducing the rate of the ring opening step of the reaction. In terms of biological role, hydrolyzes alpha-, beta- and gamma-cyclodextrins and the resulting linear maltodextrins, with the highest activity with beta-cyclodextrin (cyclomaltoheptaose). Soluble starch is hydrolyzed slowly, but it is nevertheless preferred over pullulan as a substrate. Is able to hydrolyze amylose and amylopectin, with a very strong preference for amylose, with maltose and glucose as the main products. Maltose and glucose are the main hydrolysis products of cyclomaltodextrins, maltodextrins and starch, whereas panose is the main hydrolysis product of pullulan. Acarbose is partially hydrolyzed to glucose and pseudotrisaccharide. No activity with maltose as substrate. Has transglycosylating activity with high concentrations of maltotriose, maltotetraose and starch. This Bacillus sp protein is Cyclomaltodextrinase.